The chain runs to 505 residues: ATP synthase subunit alpha (505 aa).

ATP is bound at residue Gly-171 to Thr-178.

Belongs to the ATPase alpha/beta chains family. F-type ATPases have 2 components, CF(1) - the catalytic core - and CF(0) - the membrane proton channel. CF(1) has five subunits: alpha(3), beta(3), gamma(1), delta(1), epsilon(1). CF(0) has three main subunits: a(1), b(2) and c(9-12). The alpha and beta chains form an alternating ring which encloses part of the gamma chain. CF(1) is attached to CF(0) by a central stalk formed by the gamma and epsilon chains, while a peripheral stalk is formed by the delta and b chains.

The protein localises to the cell inner membrane. It carries out the reaction ATP + H2O + 4 H(+)(in) = ADP + phosphate + 5 H(+)(out). In terms of biological role, produces ATP from ADP in the presence of a proton gradient across the membrane. The alpha chain is a regulatory subunit. This chain is ATP synthase subunit alpha, found in Campylobacter curvus (strain 525.92).